A 659-amino-acid polypeptide reads, in one-letter code: tRNA 5-methylaminomethyl-2-thiouridine biosynthesis bifunctional protein MnmC (659 aa).

Residues Met1 to Leu236 form a tRNA (mnm(5)s(2)U34)-methyltransferase region. Positions Ile267–Lys659 are FAD-dependent cmnm(5)s(2)U34 oxidoreductase.

This sequence in the N-terminal section; belongs to the methyltransferase superfamily. tRNA (mnm(5)s(2)U34)-methyltransferase family. The protein in the C-terminal section; belongs to the DAO family. It depends on FAD as a cofactor.

It is found in the cytoplasm. The catalysed reaction is 5-aminomethyl-2-thiouridine(34) in tRNA + S-adenosyl-L-methionine = 5-methylaminomethyl-2-thiouridine(34) in tRNA + S-adenosyl-L-homocysteine + H(+). Functionally, catalyzes the last two steps in the biosynthesis of 5-methylaminomethyl-2-thiouridine (mnm(5)s(2)U) at the wobble position (U34) in tRNA. Catalyzes the FAD-dependent demodification of cmnm(5)s(2)U34 to nm(5)s(2)U34, followed by the transfer of a methyl group from S-adenosyl-L-methionine to nm(5)s(2)U34, to form mnm(5)s(2)U34. The chain is tRNA 5-methylaminomethyl-2-thiouridine biosynthesis bifunctional protein MnmC from Pseudomonas fluorescens (strain Pf0-1).